Consider the following 101-residue polypeptide: MFVKKGDKVRVIAGKDKGTEAVVLKALPKVNKVIVEGVGMIKKHQKPNTENPQGAIVEKEAPIHVSNVQVLDKNGVAGRIGYKVVDGKKVRYSKKSGEVLD.

Belongs to the universal ribosomal protein uL24 family. Part of the 50S ribosomal subunit.

One of two assembly initiator proteins, it binds directly to the 5'-end of the 23S rRNA, where it nucleates assembly of the 50S subunit. Its function is as follows. One of the proteins that surrounds the polypeptide exit tunnel on the outside of the subunit. The sequence is that of Large ribosomal subunit protein uL24 from Streptococcus pyogenes serotype M1.